Reading from the N-terminus, the 553-residue chain is Methyl-coenzyme M reductase II subunit alpha (553 aa).

Q150 provides a ligand contact to coenzyme F430. Coenzyme B is bound by residues R228, 259–260 (KH), and R273. Residue H260 is modified to Pros-methylhistidine. The residue at position 274 (R274) is a 5-methylarginine. Residue Y335 participates in coenzyme M binding. A 2-methylglutamine modification is found at Q402. Y446 provides a ligand contact to coenzyme M. G447 bears the 1-thioglycine mark. Residue D452 is modified to (Z)-2,3-didehydroaspartate. C454 is subject to S-methylcysteine.

This sequence belongs to the methyl-coenzyme M reductase alpha subunit family. In terms of assembly, MCR is a hexamer of two alpha, two beta, and two gamma chains, forming a dimer of heterotrimers. Requires coenzyme F430 as cofactor. In terms of processing, the alpha subunit contains six modified amino acids near the active site region. Is methylated on His-260, Arg-274, Gln-402 and Cys-454, probably by the action of specific S-adenosylmethionine-dependent methyltransferases. Also contains a thioglycine at position 447, forming a thiopeptide bond. Contains a didehydroaspartate residue at position 452. The methylation on C5 of Arg-274 is a post-translational methylation not essential in vivo, but which plays a role for the stability and structural integrity of MCR.

The enzyme catalyses coenzyme B + methyl-coenzyme M = methane + coenzyme M-coenzyme B heterodisulfide. The protein operates within one-carbon metabolism; methyl-coenzyme M reduction; methane from methyl-coenzyme M: step 1/1. Its function is as follows. Component of the methyl-coenzyme M reductase (MCR) I that catalyzes the reductive cleavage of methyl-coenzyme M (CoM-S-CH3 or 2-(methylthio)ethanesulfonate) using coenzyme B (CoB or 7-mercaptoheptanoylthreonine phosphate) as reductant which results in the production of methane and the mixed heterodisulfide of CoB and CoM (CoM-S-S-CoB). This is the final step in methanogenesis. The sequence is that of Methyl-coenzyme M reductase II subunit alpha (mrtA) from Methanothermobacter marburgensis (strain ATCC BAA-927 / DSM 2133 / JCM 14651 / NBRC 100331 / OCM 82 / Marburg) (Methanobacterium thermoautotrophicum).